Reading from the N-terminus, the 362-residue chain is MERIVVTLGERSYPITIASGLFNEPASFLPLKSGEQVMLVTNETLAPLYLDKVRGVLEQAGVNVDSVILPDGEQYKSLAVLDTVFTALLQKPHGRDTTLVALGGGVVGDLTGFAAASYQRGVRFIQVPTTLLSQVDSSVGGKTAANHPLGKNMIGAFYQPASVVVDLDCLKTLPPRELVSGLAEVIKYGIILDGAFFNWLEENLDALLRLDGPAMAYCIRRCCELKAEVVAADERETGLRALLNLGHTFGHAIEAEMGYGNWLHGEAVAAGMVMAARTSERLGQFSSAETQRIITLLKRAGLPVNGPREMSAQAYLPHMLRDKKVLAGEIRLILPLAIGKSEVRSGVSHELVLNAIADCQSA.

NAD(+) is bound by residues 71 to 76 (DGEQYK), 105 to 109 (GVVGD), 129 to 130 (TT), K142, K151, and 169 to 172 (CLKT). Residues E184, H247, and H264 each contribute to the Zn(2+) site.

Belongs to the sugar phosphate cyclases superfamily. Dehydroquinate synthase family. It depends on Co(2+) as a cofactor. Zn(2+) serves as cofactor. NAD(+) is required as a cofactor.

The protein localises to the cytoplasm. It carries out the reaction 7-phospho-2-dehydro-3-deoxy-D-arabino-heptonate = 3-dehydroquinate + phosphate. It participates in metabolic intermediate biosynthesis; chorismate biosynthesis; chorismate from D-erythrose 4-phosphate and phosphoenolpyruvate: step 2/7. Its function is as follows. Catalyzes the conversion of 3-deoxy-D-arabino-heptulosonate 7-phosphate (DAHP) to dehydroquinate (DHQ). The protein is 3-dehydroquinate synthase of Shigella boydii serotype 18 (strain CDC 3083-94 / BS512).